The following is a 603-amino-acid chain: Threonine--tRNA ligase (603 aa).

Positions 209 to 500 are catalytic; the sequence is DHRKLGNEMK…LIEHCAGELP (292 aa). The Zn(2+) site is built by Cys301, His352, and His477.

The protein belongs to the class-II aminoacyl-tRNA synthetase family. Homodimer. Requires Zn(2+) as cofactor.

Its subcellular location is the cytoplasm. It carries out the reaction tRNA(Thr) + L-threonine + ATP = L-threonyl-tRNA(Thr) + AMP + diphosphate + H(+). Functionally, catalyzes the attachment of threonine to tRNA(Thr) in a two-step reaction: L-threonine is first activated by ATP to form Thr-AMP and then transferred to the acceptor end of tRNA(Thr). Also edits incorrectly charged L-seryl-tRNA(Thr). The chain is Threonine--tRNA ligase from Campylobacter lari (strain RM2100 / D67 / ATCC BAA-1060).